Consider the following 268-residue polypeptide: tRNA pseudouridine synthase A (268 aa).

Asp52 (nucleophile) is an active-site residue. Tyr113 lines the substrate pocket.

It belongs to the tRNA pseudouridine synthase TruA family. Homodimer.

The enzyme catalyses uridine(38/39/40) in tRNA = pseudouridine(38/39/40) in tRNA. Functionally, formation of pseudouridine at positions 38, 39 and 40 in the anticodon stem and loop of transfer RNAs. The sequence is that of tRNA pseudouridine synthase A from Chlamydia felis (strain Fe/C-56) (Chlamydophila felis).